The chain runs to 150 residues: Putative antitoxin VapB45 (150 aa).

Positions 124–150 (AQRPVAAGRPRPRPQRPVSDRVSDQRR) are disordered. Residues 141 to 150 (VSDRVSDQRR) are compositionally biased toward basic and acidic residues.

This sequence belongs to the phD/YefM antitoxin family.

Possibly the antitoxin component of a type II toxin-antitoxin (TA) system. Its cognate toxin is VapC45 (Potential). The chain is Putative antitoxin VapB45 (vapB45) from Mycobacterium tuberculosis (strain CDC 1551 / Oshkosh).